The sequence spans 75 residues: uncharacterized protein (75 aa).

4Fe-4S ferredoxin-type domains follow at residues 2–30 (SHTIVTEKCIGVAECVNACPVSCIHKGEG) and 37–68 (DWYWIDFAACIDCSICIQVCPTKGAILDKEEP). [3Fe-4S] cluster contacts are provided by C10 and C16. Residues C20, C46, C49, and C52 each contribute to the [4Fe-4S] cluster site. C56 provides a ligand contact to [3Fe-4S] cluster.

The cofactor is [4Fe-4S] cluster. [3Fe-4S] cluster is required as a cofactor.

It is found in the plastid. It localises to the chloroplast. This is an uncharacterized protein from Porphyra purpurea (Red seaweed).